The primary structure comprises 391 residues: Protein kinase ORF14 (391 aa).

In terms of domain architecture, Protein kinase spans 109 to 391 (VPLRHTRGNI…ETLVDEFSKI (283 aa)). K134 is a binding site for ATP. D235 serves as the catalytic Proton acceptor.

Belongs to the protein kinase superfamily. Ser/Thr protein kinase family.

The enzyme catalyses L-seryl-[protein] + ATP = O-phospho-L-seryl-[protein] + ADP + H(+). It catalyses the reaction L-threonyl-[protein] + ATP = O-phospho-L-threonyl-[protein] + ADP + H(+). The protein is Protein kinase ORF14 (ORF14) of Ictalurid herpesvirus 1 (strain Auburn) (IcHV-1).